The following is a 373-amino-acid chain: Cobalt-precorrin-5B C(1)-methyltransferase (373 aa).

This sequence belongs to the CbiD family.

It carries out the reaction Co-precorrin-5B + S-adenosyl-L-methionine = Co-precorrin-6A + S-adenosyl-L-homocysteine. Its pathway is cofactor biosynthesis; adenosylcobalamin biosynthesis; cob(II)yrinate a,c-diamide from sirohydrochlorin (anaerobic route): step 6/10. In terms of biological role, catalyzes the methylation of C-1 in cobalt-precorrin-5B to form cobalt-precorrin-6A. The protein is Cobalt-precorrin-5B C(1)-methyltransferase of Listeria welshimeri serovar 6b (strain ATCC 35897 / DSM 20650 / CCUG 15529 / CIP 8149 / NCTC 11857 / SLCC 5334 / V8).